Here is a 751-residue protein sequence, read N- to C-terminus: Cytosolic neutral trehalase (751 aa).

Over residues 1-15 (MDDSALPSNTSNGIN) the composition is skewed to polar residues. Disordered stretches follow at residues 1–42 (MDDS…NPES) and 64–88 (DFHE…NPRK). Positions 64–78 (DFHEMLGDRNTRRGS) are enriched in basic and acidic residues. Residues aspartate 105, aspartate 107, asparagine 109, glutamine 111, and aspartate 116 each contribute to the Ca(2+) site. Substrate is bound by residues arginine 292, 299–300 (WD), asparagine 336, 345–347 (RSQ), glutamate 412, arginine 461, and glycine 464. Catalysis depends on proton donor/acceptor residues aspartate 466 and glutamate 670.

The protein belongs to the glycosyl hydrolase 37 family. Requires Ca(2+) as cofactor.

Its subcellular location is the cytoplasm. It catalyses the reaction alpha,alpha-trehalose + H2O = alpha-D-glucose + beta-D-glucose. The protein operates within carbohydrate degradation. With respect to regulation, activated by calcium. Functionally, hydrolyzes intracellular trehalose to glucose. The disaccharide trehalose serves as a storage carbohydrate that is mobilized during conidial germination. Regulates the level of trehalose as a protectant for cell integrity during heat stress. The sequence is that of Cytosolic neutral trehalase from Emericella nidulans (strain FGSC A4 / ATCC 38163 / CBS 112.46 / NRRL 194 / M139) (Aspergillus nidulans).